A 126-amino-acid chain; its full sequence is Follitropin subunit beta (126 aa).

Residues 1–19 form the signal peptide; that stretch reads MKLIQLCILFWCWRAICCQ. 6 disulfides stabilise this stretch: C21–C69, C35–C84, C38–C122, C46–C100, C50–C102, and C105–C112. Residues N25 and N42 are each glycosylated (N-linked (GlcNAc...) asparagine).

This sequence belongs to the glycoprotein hormones subunit beta family. As to quaternary structure, heterodimer. The active follitropin is a heterodimer composed of an alpha chain/CGA shared with other hormones and a unique beta chain/FSHB shown here.

It is found in the secreted. Its function is as follows. Together with the alpha chain CGA constitutes follitropin, the follicle-stimulating hormone, and provides its biological specificity to the hormone heterodimer. Binds FSHR, a G protein-coupled receptor, on target cells to activate downstream signaling pathways. Follitropin is involved in follicle development and spermatogenesis in reproductive organs. The protein is Follitropin subunit beta (FSHB) of Phodopus sungorus (Striped hairy-footed hamster).